A 584-amino-acid polypeptide reads, in one-letter code: MLLRMSTLLLRTLREDPADAEVPSHRLLLRAGYLRRAAPGGYTWLPLGKLVLDRVAEVIRTEMLAIGDQEVHFPALLPAEPYRTSGRWTEYGDDLITLVDRRGAEHLLAPTHEEPAALLVKELFTSYRDFPVGIFQIQTKFRDEARPRAGLLRGREFLMKDAYSFDLDEAGLQAAYDRHRSAYQKIFARLGLDYAVVHAVSGAMGGSASEEFLATSKIGEDVYVGCTACDHTANTEAVTTLAPPASNPEERPATQVHDTPDTPTIASLVGLANARALAGRDDWAAGDTLKNVVLTIRPPGAAKSELLVIGLPGDREVDLKRVAATLAPATVTVFDGWADHPELVRGYLGPQVMAKLGVRYLVDPRVVPGTAWLTGANEPGRHATNVVCGRDFLPDGTIEAAEVRPGDPCPACRTGQLTLRRGIEIGHIFQLGRRYTDAFTVDVLGPEGQSVRPTMGCYGIGVSRAVAVIAEQHHDERGLVWPTEVAPCDVHLVAAGRGPQVETALGLGNRLAEAGLRVLVDDRGHVSAGVKFTDAELVGIPRTVVVGRRLADGYAEVRDRPSGKRADVRVDALVEHLVNEVHSG.

The disordered stretch occupies residues 242–261; it reads APPASNPEERPATQVHDTPD.

Belongs to the class-II aminoacyl-tRNA synthetase family. ProS type 1 subfamily. As to quaternary structure, homodimer.

Its subcellular location is the cytoplasm. The enzyme catalyses tRNA(Pro) + L-proline + ATP = L-prolyl-tRNA(Pro) + AMP + diphosphate. Functionally, catalyzes the attachment of proline to tRNA(Pro) in a two-step reaction: proline is first activated by ATP to form Pro-AMP and then transferred to the acceptor end of tRNA(Pro). As ProRS can inadvertently accommodate and process non-cognate amino acids such as alanine and cysteine, to avoid such errors it has two additional distinct editing activities against alanine. One activity is designated as 'pretransfer' editing and involves the tRNA(Pro)-independent hydrolysis of activated Ala-AMP. The other activity is designated 'posttransfer' editing and involves deacylation of mischarged Ala-tRNA(Pro). The misacylated Cys-tRNA(Pro) is not edited by ProRS. This Salinispora arenicola (strain CNS-205) protein is Proline--tRNA ligase.